The following is a 1019-amino-acid chain: UPF0182 protein Krad_1193 (1019 aa).

7 helical membrane-spanning segments follow: residues 19 to 39 (GAALPTVVILVAVVIAVVVGA), 61 to 81 (LWLQVLLFTLGALLLAAAVAV), 115 to 135 (RLVVVVLSAAAGLFGGSVAMS), 169 to 189 (WLAFLVSFLTAAVVLAGIAGL), 213 to 233 (VHLASLAAAFLLLRAAGYWLD), 264 to 284 (AILALIAVVVALLFVAAAVGT), and 291 to 311 (IGTGLLVVSAIAIGGIYPWAV). Disordered regions lie at residues 897-934 (GNSGAGAGDEGAPPPTAGTPAPTDGATGGPAPDPATGD) and 977-1019 (DAAS…TPTP). The span at 977–1005 (DAASAAEARLERSGTSGPTSSSSPSASSA) shows a compositional bias: low complexity. The segment covering 1006–1019 (PPVPGETPAATPTP) has biased composition (pro residues).

Belongs to the UPF0182 family.

It is found in the cell membrane. The sequence is that of UPF0182 protein Krad_1193 from Kineococcus radiotolerans (strain ATCC BAA-149 / DSM 14245 / SRS30216).